The chain runs to 282 residues: U1 small nuclear ribonucleoprotein A (282 aa).

Position 2 is an N-acetylalanine (Ala2). Residues His10–Thr89 form the RRM 1 domain. Lys60 is modified (N6-acetyllysine). A disordered region spans residues Thr100–Pro132. Thr131 bears the Phosphothreonine mark. The residue at position 152 (Arg152) is an Omega-N-methylarginine. The RRM 2 domain occupies His208 to Lys282.

This sequence belongs to the RRM U1 A/B'' family. As to quaternary structure, U1 snRNP is composed of the 7 core Sm proteins SNRPB, SNRPD1, SNRPD2, SNRPD3, SNRPE, SNRPF and SNRPG that assemble in a heptameric protein ring on the Sm site of the small nuclear RNA to form the core snRNP, and at least three U1 snRNP-specific proteins SNRNP70/U1-70K, SNRPA/U1-A and SNRPC/U1-C. Interacts with SFPQ; component of a snRNP-free complex with SFPQ. Interacts with IVNS1ABP (via BACK domain); the interaction is indirect.

It localises to the nucleus. Component of the spliceosomal U1 snRNP, which is essential for recognition of the pre-mRNA 5' splice-site and the subsequent assembly of the spliceosome. U1 snRNP is the first snRNP to interact with pre-mRNA. This interaction is required for the subsequent binding of U2 snRNP and the U4/U6/U5 tri-snRNP. SNRPA binds stem loop II of U1 snRNA. In a snRNP-free form (SF-A) may be involved in coupled pre-mRNA splicing and polyadenylation process. May bind preferentially to the 5'-UGCAC-3' motif on RNAs. In Homo sapiens (Human), this protein is U1 small nuclear ribonucleoprotein A (SNRPA).